The primary structure comprises 140 residues: RxLR effector protein CRE2 (140 aa).

The N-terminal stretch at 1-24 is a signal peptide; the sequence is MRWLIWTAVSTLVMLLAMTEVSAS. Residues 56–72 carry the RxLR-dEER motif; that stretch reads RSLRDKSSSLITESEER.

It belongs to the RxLR effector family.

It is found in the secreted. Its subcellular location is the host cell. Functionally, effector that is involved in host plant infection. Contributes to virulence during the early infection stage, by inhibiting plant defense responses induced by both PAMP-triggered immunity (PTI) and effector-triggered immunity (ETI). The polypeptide is RxLR effector protein CRE2 (Phytophthora infestans (strain T30-4) (Potato late blight agent)).